The following is a 168-amino-acid chain: MQSLQHKASEWSGVLTSNAFAIDDTNLFEKLGLQTFISLSTNFYNRVYDDEEEWFHLIFANSDKQIAIQNQYEFLVQRMGGPPLYSQRRGHPALIARHRAFPVTHEAAERWLHHMQQAVDTSSDIDDDSKIKLMNFFRHTAYFIVAGIELKNQNFQMPCKNAPSPCKN.

H98 contributes to the heme b binding site.

Belongs to the truncated hemoglobin family. Group II subfamily. Homodimer when ferric. Mainly expressed in root nodules, but barely in leaves, roots, stems, flowers and fruits.

Hemoglobin-like protein that exhibits an unusual concentration-independent binding of O(2) and CO. Required for general plant development and during nodulation. May promote shoot organogenesis from root explants. The sequence is that of Group 2 truncated hemoglobin 3-1 from Lotus japonicus (Lotus corniculatus var. japonicus).